Reading from the N-terminus, the 1347-residue chain is Spermatogenesis-associated protein 31A3 (1347 aa).

The helical transmembrane segment at 23 to 43 (PWVLDIFLTLVFALGFFFLLL) threads the bilayer. Disordered regions lie at residues 55 to 87 (PSPS…GREC), 108 to 142 (HLDK…HEPM), 154 to 235 (SPDP…STLI), 373 to 397 (EQDT…GPQK), 627 to 658 (QDES…EAQK), 900 to 955 (RGIP…REAV), 1084 to 1161 (VHEE…PSVS), and 1313 to 1335 (KAVS…SHHH). Residues 60-82 (GKRKCPVGRRRRPRGRMKNHSLR) are compositionally biased toward basic residues. Residues 165–178 (LASTPSPGPMTTSV) show a composition bias toward polar residues. The span at 198–211 (PEPPALFPHPPHTP) shows a compositional bias: pro residues. Polar residues-rich tracts occupy residues 627–651 (QDES…STGE) and 927–948 (LTYS…SSKA). Composition is skewed to basic and acidic residues over residues 1108–1127 (HKSE…RLEG) and 1137–1146 (RKTEDTHQDE).

This sequence belongs to the SPATA31 family.

Its subcellular location is the membrane. May play a role in spermatogenesis. This is Spermatogenesis-associated protein 31A3 (SPATA31A3) from Homo sapiens (Human).